Here is a 202-residue protein sequence, read N- to C-terminus: Ribosomal RNA small subunit methyltransferase G (202 aa).

Residues G75, F80, 125–126 (VQ), and R139 each bind S-adenosyl-L-methionine.

It belongs to the methyltransferase superfamily. RNA methyltransferase RsmG family.

The protein localises to the cytoplasm. Its function is as follows. Specifically methylates the N7 position of a guanine in 16S rRNA. In Mesomycoplasma hyopneumoniae (strain 7448) (Mycoplasma hyopneumoniae), this protein is Ribosomal RNA small subunit methyltransferase G.